An 888-amino-acid polypeptide reads, in one-letter code: E3 ubiquitin-protein ligase SH3RF1 (888 aa).

The RING-type zinc-finger motif lies at 12-53 (CPVCLERLDASAKVLPCQHTFCKRCLLGIVGSRNELRCPECR). SH3 domains lie at 134–193 (PQLP…IIKP) and 196–259 (QPPP…FNSA). Residues 275-321 (DAGECSSAAAQSSTAPKHSDTKKNTKKRHSFTSLTMANKSSQASQNR) are disordered. An interaction with RAC1 region spans residues 292-362 (HSDTKKNTKK…APSQVHISTT (71 aa)). Phosphoserine is present on Ser304. Positions 305–321 (FTSLTMANKSSQASQNR) are enriched in polar residues. The tract at residues 440 to 543 (HLRPQTRPSV…STAGGPAQKL (104 aa)) is interaction with AKT2. Residues 445-506 (TRPSVYVAIY…PGNYVAPVTR (62 aa)) form the SH3 3 domain. 3 disordered regions span residues 516–549 (VPMS…NGVA), 617–637 (SPAS…APLM), and 693–741 (PDSA…ASPT). Residues 520-535 (TAGQTSRGVTMVSPST) show a composition bias toward polar residues. Ser532 carries the phosphoserine modification. Polar residues predominate over residues 693 to 704 (PDSASLACGNSS). Residues 707 to 718 (KPDKDSKKEKKG) are compositionally biased toward basic and acidic residues. Ser735 carries the post-translational modification Phosphoserine. An SH3 4 domain is found at 829–888 (VVCERHRVVVSYPPQSEAELELKEGDIVFVHKKREDGWFKGTLQRNGKTGLFPGSFVENI).

Belongs to the SH3RF family. As to quaternary structure, interacts with HERP1. Interacts with RAC1; in a GTP-dependent manner. Interacts with MAP3K10/MLK2 and MAP3K11/MLK3. Interacts with MAPK8IP; this interaction leads to the PJAC complex (POSH-JIP or SH3RF1/MAPK8IP apoptotic complex) with a 1:1 ratio. Interacts with SIAH1. Probably part of a signaling complex that may contain SH3RF1, MAPK8IP, DLK1, MAP2K4/MKK4, MAP2K7/MKK7, MAPK8/JNK1, MAPK9/JNK2, AKT1 and AKT2. Found in a complex with RAC2, MAP3K7/TAK1, MAP2K7/MKK7, MAPK8IP1/JIP1, MAPK8/JNK1 and MAPK9/JNK2. Found in a complex with RAC1, MAP3K11/MLK3, MAP2K7/MKK7, MAPK8IP1/JIP1 and MAPK8/JNK1. Interacts with SH3RF2. In terms of processing, phosphorylated at Ser-304 by AKT1 and AKT2. When phosphorylated, it has reduced ability to bind Rac. Autoubiquitinated. Ubiquitinated by SH3RF2, leading to proteasome-mediated degradation.

It localises to the cytoplasm. The protein localises to the perinuclear region. It is found in the cell projection. The protein resides in the lamellipodium. Its subcellular location is the golgi apparatus. It localises to the trans-Golgi network. It carries out the reaction S-ubiquitinyl-[E2 ubiquitin-conjugating enzyme]-L-cysteine + [acceptor protein]-L-lysine = [E2 ubiquitin-conjugating enzyme]-L-cysteine + N(6)-ubiquitinyl-[acceptor protein]-L-lysine.. It participates in protein modification; protein ubiquitination. In terms of biological role, has E3 ubiquitin-protein ligase activity. In the absence of an external substrate, it can catalyze self-ubiquitination. Stimulates ubiquitination of potassium channel KCNJ1, enhancing it's dynamin-dependent and clathrin-independent endocytosis. Acts as a scaffold protein that coordinates with MAPK8IP1/JIP1 in organizing different components of the JNK pathway, including RAC1 or RAC2, MAP3K11/MLK3 or MAP3K7/TAK1, MAP2K7/MKK7, MAPK8/JNK1 and/or MAPK9/JNK2 into a functional multiprotein complex to ensure the effective activation of the JNK signaling pathway. Regulates the differentiation of CD4(+) and CD8(+) T-cells and promotes T-helper 1 (Th1) cell differentiation. Regulates the activation of MAPK8/JNK1 and MAPK9/JNK2 in CD4(+) T-cells and the activation of MAPK8/JNK1 in CD8(+) T-cells. Controls proper cortical neuronal migration and the formation of proximal cytoplasmic dilation in the leading process (PCDLP) in migratory neocortical neurons by regulating the proper localization of activated RAC1 and F-actin assembly. The polypeptide is E3 ubiquitin-protein ligase SH3RF1 (SH3RF1) (Pongo abelii (Sumatran orangutan)).